The sequence spans 638 residues: DEAD-box ATP-dependent RNA helicase 52B (638 aa).

Low complexity-rich tracts occupy residues methionine 1–alanine 21 and glycine 40–proline 67. Residues methionine 1–proline 129 form a disordered region. Over residues valine 79 to alanine 112 the composition is skewed to gly residues. Basic and acidic residues predominate over residues glycine 119–aspartate 128. The short motif at asparagine 169–arginine 197 is the Q motif element. The Helicase ATP-binding domain maps to isoleucine 200–leucine 384. Alanine 213–threonine 220 lines the ATP pocket. Positions aspartate 328 to aspartate 331 match the DEAD box motif. Positions tyrosine 411–alanine 562 constitute a Helicase C-terminal domain. The disordered stretch occupies residues serine 565 to aspartate 638. Positions phenylalanine 567 to phenylalanine 583 are enriched in gly residues. Basic and acidic residues predominate over residues glycine 584–glycine 593. The span at serine 594–glycine 632 shows a compositional bias: gly residues.

This sequence belongs to the DEAD box helicase family. DDX3/DED1 subfamily.

The catalysed reaction is ATP + H2O = ADP + phosphate + H(+). This Oryza sativa subsp. japonica (Rice) protein is DEAD-box ATP-dependent RNA helicase 52B (PL10B).